A 253-amino-acid polypeptide reads, in one-letter code: Triosephosphate isomerase (253 aa).

9 to 11 (NWK) contacts substrate. The Electrophile role is filled by His96. Glu168 acts as the Proton acceptor in catalysis. Residues Gly174, Ser213, and 234–235 (GG) each bind substrate.

The protein belongs to the triosephosphate isomerase family. Homodimer.

The protein localises to the cytoplasm. It carries out the reaction D-glyceraldehyde 3-phosphate = dihydroxyacetone phosphate. It participates in carbohydrate biosynthesis; gluconeogenesis. Its pathway is carbohydrate degradation; glycolysis; D-glyceraldehyde 3-phosphate from glycerone phosphate: step 1/1. Its function is as follows. Involved in the gluconeogenesis. Catalyzes stereospecifically the conversion of dihydroxyacetone phosphate (DHAP) to D-glyceraldehyde-3-phosphate (G3P). The protein is Triosephosphate isomerase of Hydrogenovibrio crunogenus (strain DSM 25203 / XCL-2) (Thiomicrospira crunogena).